Here is a 72-residue protein sequence, read N- to C-terminus: Large ribosomal subunit protein bL31 (72 aa).

Zn(2+) contacts are provided by Cys-16, Cys-18, Cys-38, and Cys-41.

The protein belongs to the bacterial ribosomal protein bL31 family. Type A subfamily. In terms of assembly, part of the 50S ribosomal subunit. Zn(2+) serves as cofactor.

In terms of biological role, binds the 23S rRNA. In Vibrio cholerae serotype O1 (strain ATCC 39541 / Classical Ogawa 395 / O395), this protein is Large ribosomal subunit protein bL31.